The primary structure comprises 264 residues: Thymidylate synthase (264 aa).

Residue Arg-21 coordinates dUMP. His-51 contributes to the (6R)-5,10-methylene-5,6,7,8-tetrahydrofolate binding site. 126-127 serves as a coordination point for dUMP; that stretch reads RR. The active-site Nucleophile is Cys-146. DUMP-binding positions include 166-169, Asn-177, and 207-209; these read RSAD and HLY. Asp-169 provides a ligand contact to (6R)-5,10-methylene-5,6,7,8-tetrahydrofolate. (6R)-5,10-methylene-5,6,7,8-tetrahydrofolate is bound at residue Ala-263.

The protein belongs to the thymidylate synthase family. Bacterial-type ThyA subfamily. As to quaternary structure, homodimer.

It is found in the cytoplasm. It catalyses the reaction dUMP + (6R)-5,10-methylene-5,6,7,8-tetrahydrofolate = 7,8-dihydrofolate + dTMP. The protein operates within pyrimidine metabolism; dTTP biosynthesis. In terms of biological role, catalyzes the reductive methylation of 2'-deoxyuridine-5'-monophosphate (dUMP) to 2'-deoxythymidine-5'-monophosphate (dTMP) while utilizing 5,10-methylenetetrahydrofolate (mTHF) as the methyl donor and reductant in the reaction, yielding dihydrofolate (DHF) as a by-product. This enzymatic reaction provides an intracellular de novo source of dTMP, an essential precursor for DNA biosynthesis. The protein is Thymidylate synthase of Cupriavidus necator (strain ATCC 17699 / DSM 428 / KCTC 22496 / NCIMB 10442 / H16 / Stanier 337) (Ralstonia eutropha).